Consider the following 51-residue polypeptide: Insulin (51 aa).

Intrachain disulfides connect cysteine 7–cysteine 36, cysteine 19–cysteine 49, and cysteine 35–cysteine 40.

The protein belongs to the insulin family. As to quaternary structure, heterodimer of a B chain and an A chain linked by two disulfide bonds.

The protein resides in the secreted. Functionally, insulin decreases blood glucose concentration. It increases cell permeability to monosaccharides, amino acids and fatty acids. It accelerates glycolysis, the pentose phosphate cycle, and glycogen synthesis in liver. The chain is Insulin (INS) from Myocastor coypus (Coypu).